A 730-amino-acid polypeptide reads, in one-letter code: Elongation factor 2 (730 aa).

Positions 19–260 (QRIRNIGIVA…MVIHFLPNPL (242 aa)) constitute a tr-type G domain. Residues 28-35 (AHIDHGKT), 94-98 (DTPGH), and 148-151 (NKVD) contribute to the GTP site. H596 carries the diphthamide modification.

The protein belongs to the TRAFAC class translation factor GTPase superfamily. Classic translation factor GTPase family. EF-G/EF-2 subfamily.

Its subcellular location is the cytoplasm. Its function is as follows. Catalyzes the GTP-dependent ribosomal translocation step during translation elongation. During this step, the ribosome changes from the pre-translocational (PRE) to the post-translocational (POST) state as the newly formed A-site-bound peptidyl-tRNA and P-site-bound deacylated tRNA move to the P and E sites, respectively. Catalyzes the coordinated movement of the two tRNA molecules, the mRNA and conformational changes in the ribosome. The protein is Elongation factor 2 of Methanosarcina mazei (strain ATCC BAA-159 / DSM 3647 / Goe1 / Go1 / JCM 11833 / OCM 88) (Methanosarcina frisia).